Here is a 259-residue protein sequence, read N- to C-terminus: Small ribosomal subunit protein eS1 (259 aa).

Alanine 2 bears the N-acetylalanine; partial mark.

The protein belongs to the eukaryotic ribosomal protein eS1 family. As to quaternary structure, component of the small ribosomal subunit. Mature ribosomes consist of a small (40S) and a large (60S) subunit. The 40S subunit contains about 33 different proteins and 1 molecule of RNA (18S). The 60S subunit contains about 49 different proteins and 3 molecules of RNA (25S, 5.8S and 5S).

It is found in the cytoplasm. In Cryptococcus neoformans var. neoformans serotype D (strain B-3501A) (Filobasidiella neoformans), this protein is Small ribosomal subunit protein eS1.